We begin with the raw amino-acid sequence, 474 residues long: UDP glycosyltransferase 9 (474 aa).

UDP-alpha-D-glucose is bound by residues Ser296, 349–350 (WC), 367–375 (HCGWNSTLE), and 389–392 (WADQ).

Belongs to the UDP-glycosyltransferase family.

In Catharanthus roseus (Madagascar periwinkle), this protein is UDP glycosyltransferase 9.